The primary structure comprises 332 residues: Ketol-acid reductoisomerase (NADP(+)) 2 (332 aa).

One can recognise a KARI N-terminal Rossmann domain in the interval 2 to 182 (AELFYDADAD…GGTRAGVIRT (181 aa)). Residues 25 to 28 (YGSQ), Ser-51, Ser-53, and 83 to 86 (DPIQ) each bind NADP(+). His-108 is a catalytic residue. Gly-134 contacts NADP(+). Residues 183 to 328 (TFTEETETDL…KELRKLMSWV (146 aa)) enclose the KARI C-terminal knotted domain. 4 residues coordinate Mg(2+): Asp-191, Glu-195, Glu-227, and Glu-231. Ser-252 lines the substrate pocket.

This sequence belongs to the ketol-acid reductoisomerase family. It depends on Mg(2+) as a cofactor.

The catalysed reaction is (2R)-2,3-dihydroxy-3-methylbutanoate + NADP(+) = (2S)-2-acetolactate + NADPH + H(+). It catalyses the reaction (2R,3R)-2,3-dihydroxy-3-methylpentanoate + NADP(+) = (S)-2-ethyl-2-hydroxy-3-oxobutanoate + NADPH + H(+). The protein operates within amino-acid biosynthesis; L-isoleucine biosynthesis; L-isoleucine from 2-oxobutanoate: step 2/4. Its pathway is amino-acid biosynthesis; L-valine biosynthesis; L-valine from pyruvate: step 2/4. Functionally, involved in the biosynthesis of branched-chain amino acids (BCAA). Catalyzes an alkyl-migration followed by a ketol-acid reduction of (S)-2-acetolactate (S2AL) to yield (R)-2,3-dihydroxy-isovalerate. In the isomerase reaction, S2AL is rearranged via a Mg-dependent methyl migration to produce 3-hydroxy-3-methyl-2-ketobutyrate (HMKB). In the reductase reaction, this 2-ketoacid undergoes a metal-dependent reduction by NADPH to yield (R)-2,3-dihydroxy-isovalerate. The protein is Ketol-acid reductoisomerase (NADP(+)) 2 of Streptomyces coelicolor (strain ATCC BAA-471 / A3(2) / M145).